Consider the following 944-residue polypeptide: Bifunctional glutamine synthetase adenylyltransferase/adenylyl-removing enzyme (944 aa).

The interval 1-440 (MSANSVFQQL…IFTQLIGEDD (440 aa)) is adenylyl removase. The segment at 448–944 (VSEFKRLWLL…LSSKQKWLDE (497 aa)) is adenylyl transferase.

This sequence belongs to the GlnE family. Mg(2+) is required as a cofactor.

It catalyses the reaction [glutamine synthetase]-O(4)-(5'-adenylyl)-L-tyrosine + phosphate = [glutamine synthetase]-L-tyrosine + ADP. The enzyme catalyses [glutamine synthetase]-L-tyrosine + ATP = [glutamine synthetase]-O(4)-(5'-adenylyl)-L-tyrosine + diphosphate. Its function is as follows. Involved in the regulation of glutamine synthetase GlnA, a key enzyme in the process to assimilate ammonia. When cellular nitrogen levels are high, the C-terminal adenylyl transferase (AT) inactivates GlnA by covalent transfer of an adenylyl group from ATP to specific tyrosine residue of GlnA, thus reducing its activity. Conversely, when nitrogen levels are low, the N-terminal adenylyl removase (AR) activates GlnA by removing the adenylyl group by phosphorolysis, increasing its activity. The regulatory region of GlnE binds the signal transduction protein PII (GlnB) which indicates the nitrogen status of the cell. The protein is Bifunctional glutamine synthetase adenylyltransferase/adenylyl-removing enzyme of Proteus mirabilis (strain HI4320).